The sequence spans 108 residues: Glutaredoxin-1 (108 aa).

Residues 3 to 106 (EEFVQQRLAN…DILLSIGVLR (104 aa)) enclose the Glutaredoxin domain. A disulfide bridge connects residues Cys-23 and Cys-26.

The protein belongs to the glutaredoxin family.

It localises to the virion. Its function is as follows. Displays thioltransferase and dehydroascorbate reductase activities. The polypeptide is Glutaredoxin-1 (OPG075) (Cynomys gunnisoni (Gunnison's prairie dog)).